We begin with the raw amino-acid sequence, 180 residues long: Negative modulator of initiation of replication (180 aa).

3 interaction with DNA regions span residues 86-87 (AV), 115-119 (RTRVY), and 149-155 (NTNTGRK).

This sequence belongs to the SeqA family. As to quaternary structure, homodimer. Polymerizes to form helical filaments.

Its subcellular location is the cytoplasm. Functionally, negative regulator of replication initiation, which contributes to regulation of DNA replication and ensures that replication initiation occurs exactly once per chromosome per cell cycle. Binds to pairs of hemimethylated GATC sequences in the oriC region, thus preventing assembly of replication proteins and re-initiation at newly replicated origins. Repression is relieved when the region becomes fully methylated. This chain is Negative modulator of initiation of replication, found in Enterobacter sp. (strain 638).